The following is a 228-amino-acid chain: MRILAVDDDRAVRESLRRSLSFNGYSVELANDGVEALEMVARDRPDALVLDVMMPRLDGLEVCRQLRSTGDDLPILVLTARDSVSERVAGLDAGADDYLPKPFALEELLARIRALLRRTKPDDAAESVAMSFSDLTLDPVTREVARGQRWISLTRTEFALLEMLIANPRRVLTRSRILEEVWGFDFPTSGNALEVYVGYLRRKTEADGESRLIHTVRGVGYVLRETPP.

A Response regulatory domain is found at 2–116; it reads RILAVDDDRA…ELLARIRALL (115 aa). At Asp-46 the chain carries 4-aspartylphosphate. The segment at residues 127-225 is a DNA-binding region (ompR/PhoB-type); that stretch reads SVAMSFSDLT…VRGVGYVLRE (99 aa).

Phosphorylated and dephosphorylated by MprB.

Its subcellular location is the cytoplasm. Member of the two-component regulatory system MprB/MprA which contributes to maintaining a balance among several systems involved in stress resistance and is required for establishment and maintenance of persistent infection in the host. Functions as a transcriptional regulator that recognizes a 19-bp nucleotide motif comprizing two loosely conserved 8-bp direct DNA-binding motif repeats separated by a 3-bp spacer region. The polypeptide is Response regulator MprA (mprA) (Mycobacterium leprae (strain TN)).